The primary structure comprises 114 residues: Phosphoribosyl-AMP cyclohydrolase (114 aa).

Aspartate 76 provides a ligand contact to Mg(2+). Position 77 (cysteine 77) interacts with Zn(2+). Mg(2+) contacts are provided by aspartate 78 and aspartate 80. Zn(2+)-binding residues include cysteine 93 and cysteine 100.

It belongs to the PRA-CH family. As to quaternary structure, homodimer. It depends on Mg(2+) as a cofactor. Zn(2+) is required as a cofactor.

The protein resides in the cytoplasm. It carries out the reaction 1-(5-phospho-beta-D-ribosyl)-5'-AMP + H2O = 1-(5-phospho-beta-D-ribosyl)-5-[(5-phospho-beta-D-ribosylamino)methylideneamino]imidazole-4-carboxamide. The protein operates within amino-acid biosynthesis; L-histidine biosynthesis; L-histidine from 5-phospho-alpha-D-ribose 1-diphosphate: step 3/9. In terms of biological role, catalyzes the hydrolysis of the adenine ring of phosphoribosyl-AMP. This Streptococcus gordonii (strain Challis / ATCC 35105 / BCRC 15272 / CH1 / DL1 / V288) protein is Phosphoribosyl-AMP cyclohydrolase.